The primary structure comprises 350 residues: Trans-enoyl reductase iliB (350 aa).

50–53 (VDGK) is a binding site for NADP(+). 145–152 (AAIATVGL) provides a ligand contact to substrate. NADP(+)-binding positions include 177–180 (SAAS), tyrosine 195, and 242–243 (LD). 262–266 (TPTQF) is a substrate binding site. Position 331–332 (331–332 (IK)) interacts with NADP(+).

The protein belongs to the zinc-containing alcohol dehydrogenase family. In terms of assembly, monomer.

It carries out the reaction N-[(4E,6E,10S,12Z,14E)-6,10-dimethyl-3-oxohexadeca-4,6,12,14-tetraenoyl]-L-tyrosyl-[ACP] = (3E,5S)-3-[(2E,4E,8S,10E,12Z)-1-hydroxy-4,8-dimethyltetradeca-2,4,10,12-tetraen-1-ylidene]-5-[(4-hydroxyphenyl)methyl]pyrrolidine-2,4-dione + holo-[ACP] + H(+). It functions in the pathway mycotoxin biosynthesis. In terms of biological role, trans-enoyl reductase; part of the gene cluster that mediates the biosynthesis of ilicicolin H, a 4-hydroxy-2-pyridonealkaloid that has potent and broad antifungal activities by inhibiting the mitochondrial respiration chain. IliB collaborates with the hybrid PKS-NRPS synthetase iliA to assemble the backbone of ilicicolin H. The PKS portion of iliA and trans-acting enoyl reductase iliB work together to construct an octaketide, and two methyl groups are introduced by the MT domain of iliA during the chain assembly. The nascent chain is then condensed with tyrosine, catalyzed by the iliA C domain, and the resulting PKS-NRPS hybrid is offloaded by the iliA RED domain to form an advanced tetramic acid intermediate. The biosynthesis of ilicicolin H starts with formation of the tetramic acid by the hybrid PKS-NRPS synthetase iliA with the partnering trans-enoyl reductase iliB since iliA lacks a designated enoylreductase (ER) domain. The cytochrome P450 monooxygenase iliC then catalyzes the ring expansion of the tetramate to the acyclic 2-pyridone. The pericyclase iliD further converts the acyclic 2-pyridone into 8-epi-ilicicolin H. 8-epi-ilicicolin H might then spontaneously convert to ilicicolin H since ilicicolin H is produced in the absence of the epimerase iliE, in contrast to what was observed for the Talaromyces variabilis ilicolin H biosynthetic pathway. This chain is Trans-enoyl reductase iliB, found in Hypocrea jecorina (strain QM6a) (Trichoderma reesei).